The chain runs to 322 residues: Replication factor C small subunit 2 (322 aa).

An ATP-binding site is contributed by 44–51 (GPPGTGKT).

This sequence belongs to the activator 1 small subunits family. RfcS subfamily. As to quaternary structure, heteromultimer composed of small subunits (RfcS) and large subunits (RfcL).

Functionally, part of the RFC clamp loader complex which loads the PCNA sliding clamp onto DNA. This chain is Replication factor C small subunit 2, found in Pyrobaculum arsenaticum (strain DSM 13514 / JCM 11321 / PZ6).